The primary structure comprises 374 residues: Queuine tRNA-ribosyltransferase (374 aa).

Catalysis depends on Asp94, which acts as the Proton acceptor. Substrate is bound by residues 94–98, Asp148, Gln191, and Gly218; that span reads DSGGF. Residues 249–255 form an RNA binding region; sequence GVGSPDY. Asp268 serves as the catalytic Nucleophile. The RNA binding; important for wobble base 34 recognition stretch occupies residues 273-277; that stretch reads TRIGR. Residues Cys306, Cys308, Cys311, and His337 each coordinate Zn(2+).

This sequence belongs to the queuine tRNA-ribosyltransferase family. In terms of assembly, homodimer. Within each dimer, one monomer is responsible for RNA recognition and catalysis, while the other monomer binds to the replacement base PreQ1. Zn(2+) serves as cofactor.

The catalysed reaction is 7-aminomethyl-7-carbaguanine + guanosine(34) in tRNA = 7-aminomethyl-7-carbaguanosine(34) in tRNA + guanine. Its pathway is tRNA modification; tRNA-queuosine biosynthesis. In terms of biological role, catalyzes the base-exchange of a guanine (G) residue with the queuine precursor 7-aminomethyl-7-deazaguanine (PreQ1) at position 34 (anticodon wobble position) in tRNAs with GU(N) anticodons (tRNA-Asp, -Asn, -His and -Tyr). Catalysis occurs through a double-displacement mechanism. The nucleophile active site attacks the C1' of nucleotide 34 to detach the guanine base from the RNA, forming a covalent enzyme-RNA intermediate. The proton acceptor active site deprotonates the incoming PreQ1, allowing a nucleophilic attack on the C1' of the ribose to form the product. After dissociation, two additional enzymatic reactions on the tRNA convert PreQ1 to queuine (Q), resulting in the hypermodified nucleoside queuosine (7-(((4,5-cis-dihydroxy-2-cyclopenten-1-yl)amino)methyl)-7-deazaguanosine). This is Queuine tRNA-ribosyltransferase from Acetivibrio thermocellus (strain ATCC 27405 / DSM 1237 / JCM 9322 / NBRC 103400 / NCIMB 10682 / NRRL B-4536 / VPI 7372) (Clostridium thermocellum).